The sequence spans 307 residues: uncharacterized protein (307 aa).

Transmembrane regions (helical) follow at residues 1-21 (MLIL…MNML), 52-72 (IVFT…IGFV), 99-119 (FIAI…LLFF), 133-153 (FLGL…AGPL), 174-194 (LLIG…IGIL), 208-228 (AMSV…MAAV), 242-262 (VVFN…ATGF), and 277-297 (FSLL…NLFY).

The protein localises to the cell membrane. This is an uncharacterized protein from Bacillus subtilis (strain 168).